A 353-amino-acid chain; its full sequence is Protein O-mannose kinase (353 aa).

Over 1 to 19 the chain is Cytoplasmic; it reads MEKKAHFVKRDFPPREAPS. The helical; Signal-anchor for type II membrane protein transmembrane segment at 20 to 40 threads the bilayer; sequence LLLLLLVVAVLLLNALLYLYL. The Lumenal segment spans residues 41 to 353; that stretch reads GNLHGSSGRA…AAMPSTREML (313 aa). The region spanning 83–353 is the Protein kinase domain; it reads VRKLKCVGEG…AAMPSTREML (271 aa). 2 N-linked (GlcNAc...) asparagine glycosylation sites follow: N163 and N237.

Belongs to the protein kinase superfamily. Ser/Thr protein kinase family. STKL subfamily.

The protein resides in the endoplasmic reticulum membrane. The catalysed reaction is 3-O-[beta-D-GalNAc-(1-&gt;3)-beta-D-GlcNAc-(1-&gt;4)-alpha-D-Man]-L-Thr-[protein] + ATP = 3-O-[beta-D-GalNAc-(1-&gt;3)-beta-D-GlcNAc-(1-&gt;4)-(O-6-P-alpha-D-Man)]-Thr-[protein] + ADP + H(+). Protein O-mannose kinase that specifically mediates phosphorylation at the 6-position of an O-mannose of the trisaccharide (N-acetylgalactosamine (GalNAc)-beta-1,3-N-acetylglucosamine (GlcNAc)-beta-1,4-mannose) to generate phosphorylated O-mannosyl trisaccharide (N-acetylgalactosamine-beta-1,3-N-acetylglucosamine-beta-1,4-(phosphate-6-)mannose). Phosphorylated O-mannosyl trisaccharide is a carbohydrate structure present in alpha-dystroglycan (DAG1), which is required for binding laminin G-like domain-containing extracellular proteins with high affinity. Only shows kinase activity when the GalNAc-beta-3-GlcNAc-beta-terminus is linked to the 4-position of O-mannose, suggesting that this disaccharide serves as the substrate recognition motif. The protein is Protein O-mannose kinase (POMK) of Gallus gallus (Chicken).